The following is a 328-amino-acid chain: DNA-directed RNA polymerase subunit alpha (328 aa).

The alpha N-terminal domain (alpha-NTD) stretch occupies residues 1-231; it reads MIYQMQMPTK…DHITFFANFS (231 aa). Residues 247–328 form an alpha C-terminal domain (alpha-CTD) region; sequence DEFESMRKLL…MDITRYQLKG (82 aa).

This sequence belongs to the RNA polymerase alpha chain family. Homodimer. The RNAP catalytic core consists of 2 alpha, 1 beta, 1 beta' and 1 omega subunit. When a sigma factor is associated with the core the holoenzyme is formed, which can initiate transcription.

The enzyme catalyses RNA(n) + a ribonucleoside 5'-triphosphate = RNA(n+1) + diphosphate. In terms of biological role, DNA-dependent RNA polymerase catalyzes the transcription of DNA into RNA using the four ribonucleoside triphosphates as substrates. This is DNA-directed RNA polymerase subunit alpha from Chlorobaculum tepidum (strain ATCC 49652 / DSM 12025 / NBRC 103806 / TLS) (Chlorobium tepidum).